A 103-amino-acid polypeptide reads, in one-letter code: UPF0145 protein EF_0241 (103 aa).

The protein belongs to the UPF0145 family.

This is UPF0145 protein EF_0241 from Enterococcus faecalis (strain ATCC 700802 / V583).